A 2005-amino-acid polypeptide reads, in one-letter code: Chitin synthase 8 (2005 aa).

The region spanning 5–773 (DEVAKLSQLT…AFRELEDELR (769 aa)) is the Myosin motor domain. 108-115 (GDTSSGKS) contacts ATP. 4 N-linked (GlcNAc...) asparagine glycosylation sites follow: Asn-164, Asn-364, Asn-390, and Asn-546. The tract at residues 585-631 (QSVKPMRAPSTRRPNRGNTIKRTNTIKKADDDDSDEDAADAADASTS) is disordered. The segment covering 615–624 (DDDSDEDAAD) has biased composition (acidic residues). The segment at 647–669 (LDLLLETLEDTKTWFTLCLRPND) is actin-binding. A run of 2 helical transmembrane segments spans residues 929–949 (KWVALTWAITFWIPSFILSRF) and 965–985 (LAINLIIWFICACAVFVIVVL). Asn-1076 is a glycosylation site (N-linked (GlcNAc...) asparagine). The next 3 membrane-spanning stretches (helical) occupy residues 1232–1252 (ILLALSLFMVAILGFKFLAAL), 1604–1624 (LIFTPGLCGFCLFSMRFIVFI), and 1626–1646 (LLSTIIAPVTVCYIVYLIVLV). Residue Asn-1650 is glycosylated (N-linked (GlcNAc...) asparagine). 2 helical membrane passes run 1653–1673 (VPLTAIIMLAAIYGCQAVIFL) and 1680–1700 (MIGWMIVYIIGIPIWSLFLPL). 2 N-linked (GlcNAc...) asparagine glycosylation sites follow: Asn-1770 and Asn-1794. Positions 1796-1821 (SFGHSPSPSYGGTPSQFGAFAPGPGS) are disordered. Residues 1797 to 1811 (FGHSPSPSYGGTPSQ) are compositionally biased toward polar residues. Residue Asn-1882 is glycosylated (N-linked (GlcNAc...) asparagine). A disordered region spans residues 1912-1950 (FATAEQQQQQQQQQQAAGLSGSGGSKSPPREAVAGGLPS). The span at 1917–1930 (QQQQQQQQQQAAGL) shows a compositional bias: low complexity. A DEK-C domain is found at 1948–2003 (LPSDSQIKLDIRSLIAESDLTTITKKQLRAKLEQKYATSIESKKAFINSEIENVLS).

It in the N-terminal section; belongs to the TRAFAC class myosin-kinesin ATPase superfamily. Myosin family. This sequence in the C-terminal section; belongs to the chitin synthase family. Class V subfamily.

Its subcellular location is the cell membrane. The protein localises to the cytoplasmic vesicle membrane. It localises to the cell tip. It carries out the reaction [(1-&gt;4)-N-acetyl-beta-D-glucosaminyl](n) + UDP-N-acetyl-alpha-D-glucosamine = [(1-&gt;4)-N-acetyl-beta-D-glucosaminyl](n+1) + UDP + H(+). In terms of biological role, polymerizes chitin, a structural polymer of the cell wall and septum, by transferring the sugar moiety of UDP-GlcNAc to the non-reducing end of the growing chitin polymer. Involved in mating tube and dikaryotic hyphae formation and required for the formation of invading hyphae during plant infection. The chain is Chitin synthase 8 from Mycosarcoma maydis (Corn smut fungus).